We begin with the raw amino-acid sequence, 595 residues long: Inactive serine/threonine-protein kinase PLK5 (595 aa).

The region spanning 27–279 (YRRGKLIGKG…LDHLLQDDFF (253 aa)) is the Protein kinase domain. ATP is bound by residues 33-41 (IGKGAFSRC) and K56. D150 (proton acceptor) is an active-site residue. Positions 326-350 (FTSKEASGPGEEGTEPDHMEAGNEE) are disordered. Basic and acidic residues predominate over residues 340-350 (EPDHMEAGNEE). 2 POLO box domains span residues 413-491 (WAPK…YMQR) and 509-595 (DISL…LQSV).

It belongs to the protein kinase superfamily. Ser/Thr protein kinase family. CDC5/Polo subfamily. Expressed in the cerebellum, eye and brain cortex (at protein level). Expressed in highly differentiated tissues, such as brain, eyes and ovary. Not detectable in proliferating tissues, such as the colon, spleen and placenta.

The protein localises to the nucleus. Its subcellular location is the nucleolus. It localises to the cytoplasm. Functionally, inactive serine/threonine-protein kinase that plays a role in cell cycle progression and neuronal differentiation. The polypeptide is Inactive serine/threonine-protein kinase PLK5 (Mus musculus (Mouse)).